Here is a 568-residue protein sequence, read N- to C-terminus: DNA mismatch repair protein MutL (568 aa).

The protein belongs to the DNA mismatch repair MutL/HexB family.

This protein is involved in the repair of mismatches in DNA. It is required for dam-dependent methyl-directed DNA mismatch repair. May act as a 'molecular matchmaker', a protein that promotes the formation of a stable complex between two or more DNA-binding proteins in an ATP-dependent manner without itself being part of a final effector complex. The sequence is that of DNA mismatch repair protein MutL from Thermosipho africanus (strain TCF52B).